Consider the following 122-residue polypeptide: Large ribosomal subunit protein uL14c (122 aa).

Belongs to the universal ribosomal protein uL14 family. In terms of assembly, part of the 50S ribosomal subunit.

It localises to the plastid. It is found in the chloroplast. Functionally, binds to 23S rRNA. This Ipomoea purpurea (Common morning glory) protein is Large ribosomal subunit protein uL14c.